A 134-amino-acid chain; its full sequence is Phosphoribosyl-AMP cyclohydrolase (134 aa).

Mg(2+) is bound at residue aspartate 93. Residue cysteine 94 participates in Zn(2+) binding. 2 residues coordinate Mg(2+): aspartate 95 and aspartate 97. Cysteine 112 and cysteine 119 together coordinate Zn(2+).

Belongs to the PRA-CH family. As to quaternary structure, homodimer. It depends on Mg(2+) as a cofactor. Zn(2+) serves as cofactor.

It is found in the cytoplasm. The enzyme catalyses 1-(5-phospho-beta-D-ribosyl)-5'-AMP + H2O = 1-(5-phospho-beta-D-ribosyl)-5-[(5-phospho-beta-D-ribosylamino)methylideneamino]imidazole-4-carboxamide. Its pathway is amino-acid biosynthesis; L-histidine biosynthesis; L-histidine from 5-phospho-alpha-D-ribose 1-diphosphate: step 3/9. Its function is as follows. Catalyzes the hydrolysis of the adenine ring of phosphoribosyl-AMP. This Caulobacter sp. (strain K31) protein is Phosphoribosyl-AMP cyclohydrolase.